A 421-amino-acid polypeptide reads, in one-letter code: 2-deoxystreptamine N-acetyl-D-glucosaminyltransferase (421 aa).

This sequence belongs to the glycosyltransferase group 1 family. Glycosyltransferase 4 subfamily.

It catalyses the reaction 2-deoxystreptamine + UDP-N-acetyl-alpha-D-glucosamine = 2'-N-acetylparomamine + UDP + H(+). Its pathway is antibiotic biosynthesis; neomycin biosynthesis. In terms of biological role, glycosyltransferase involved in the biosynthesis of neomycin by mediating conversion of 2-deoxystreptamine (2-DOS) to 2'-N-acetylparomamine using UDP-alpha-D-glucosamine as sugar donor. The polypeptide is 2-deoxystreptamine N-acetyl-D-glucosaminyltransferase (neoD) (Streptomyces fradiae (Streptomyces roseoflavus)).